A 227-amino-acid chain; its full sequence is Cytochrome c oxidase subunit 2 (227 aa).

The Mitochondrial intermembrane segment spans residues 1 to 14 (MAYPMQLGLQDATS). The helical transmembrane segment at 15–45 (PIMEELLHFHDHTLMIVFLISSLVLYIISLM) threads the bilayer. Topologically, residues 46–59 (LTTKLTHTSTMDAQ) are mitochondrial matrix. The chain crosses the membrane as a helical span at residues 60–87 (EVETIWTILPAIILIMIALPSLRILYMM). The Mitochondrial intermembrane segment spans residues 88-227 (DEINNPSLTV…HFEKWSASML (140 aa)). The Cu cation site is built by H161, C196, E198, C200, H204, and M207. Residue E198 participates in Mg(2+) binding.

The protein belongs to the cytochrome c oxidase subunit 2 family. In terms of assembly, component of the cytochrome c oxidase (complex IV, CIV), a multisubunit enzyme composed of 14 subunits. The complex is composed of a catalytic core of 3 subunits MT-CO1, MT-CO2 and MT-CO3, encoded in the mitochondrial DNA, and 11 supernumerary subunits COX4I, COX5A, COX5B, COX6A, COX6B, COX6C, COX7A, COX7B, COX7C, COX8 and NDUFA4, which are encoded in the nuclear genome. The complex exists as a monomer or a dimer and forms supercomplexes (SCs) in the inner mitochondrial membrane with NADH-ubiquinone oxidoreductase (complex I, CI) and ubiquinol-cytochrome c oxidoreductase (cytochrome b-c1 complex, complex III, CIII), resulting in different assemblies (supercomplex SCI(1)III(2)IV(1) and megacomplex MCI(2)III(2)IV(2)). Found in a complex with TMEM177, COA6, COX18, COX20, SCO1 and SCO2. Interacts with TMEM177 in a COX20-dependent manner. Interacts with COX20. Interacts with COX16. Requires Cu cation as cofactor.

The protein localises to the mitochondrion inner membrane. It carries out the reaction 4 Fe(II)-[cytochrome c] + O2 + 8 H(+)(in) = 4 Fe(III)-[cytochrome c] + 2 H2O + 4 H(+)(out). Its function is as follows. Component of the cytochrome c oxidase, the last enzyme in the mitochondrial electron transport chain which drives oxidative phosphorylation. The respiratory chain contains 3 multisubunit complexes succinate dehydrogenase (complex II, CII), ubiquinol-cytochrome c oxidoreductase (cytochrome b-c1 complex, complex III, CIII) and cytochrome c oxidase (complex IV, CIV), that cooperate to transfer electrons derived from NADH and succinate to molecular oxygen, creating an electrochemical gradient over the inner membrane that drives transmembrane transport and the ATP synthase. Cytochrome c oxidase is the component of the respiratory chain that catalyzes the reduction of oxygen to water. Electrons originating from reduced cytochrome c in the intermembrane space (IMS) are transferred via the dinuclear copper A center (CU(A)) of subunit 2 and heme A of subunit 1 to the active site in subunit 1, a binuclear center (BNC) formed by heme A3 and copper B (CU(B)). The BNC reduces molecular oxygen to 2 water molecules using 4 electrons from cytochrome c in the IMS and 4 protons from the mitochondrial matrix. This is Cytochrome c oxidase subunit 2 (MT-CO2) from Damaliscus pygargus phillipsi (Blesbok).